The sequence spans 1186 residues: DNA excision repair protein ERCC-5 (1186 aa).

The N-domain stretch occupies residues 1–78; the sequence is MGVQGLWKLL…RIRPIFVFDG (78 aa). Position 8 is an N6-acetyllysine (lysine 8). Aspartate 30 is a binding site for Mg(2+). Positions 31–67 are DNA-binding; may bind to the undamaged single-strand DNA of the DNA repair bubble; it reads ISIWLNQALKGVRDRHGNSIENPHLLTLFHRLCKLLF. Position 77 (aspartate 77) interacts with Mg(2+). The interval 79-785 is spacer region; that stretch reads DAPLLKKQTL…LRLFGIPYIQ (707 aa). Disordered regions lie at residues 306-342, 354-385, 404-473, 510-533, and 667-724; these read ESLPSSSKMHGMSFDVKSSPCEKLKTEKEPDATPPSP, GSSSEEELESENRRQARGRNAPAAVDEGSISP, CAGD…SVPK, HSDAPGLPNGRELTPASPTCTNSV, and QAEF…AEDS. Positions 325-336 are enriched in basic and acidic residues; it reads PCEKLKTEKEPD. Serine 384 carries the post-translational modification Phosphoserine. The span at 454–472 shows a compositional bias: basic and acidic residues; the sequence is AEEHVASTNEGREPTDSVP. Serine 705 carries the phosphoserine modification. The segment at 786–881 is I-domain; it reads APMEAEAQCA…VTAMEILNEF (96 aa). 4 residues coordinate Mg(2+): glutamate 789, glutamate 791, aspartate 810, and aspartate 812. The segment at 820–836 is DNA-binding; may bind to the undamaged single-strand DNA of the DNA repair bubble; it reads HVYRNFFNKNKFVEYYQ. The segment at 848 to 880 is DNA-binding; H2TH (helix-2turn-helix) motif which binds double-stranded DNA; that stretch reads RNKLINLAYLLGSDYTEGIPTVGCVTAMEILNE. Position 861 (aspartate 861) interacts with Mg(2+). The tract at residues 912–918 is DNA-binding; may bind double-stranded DNA; the sequence is TKVKKKL. The interaction with PCNA stretch occupies residues 981–1009; sequence LKQLDAQQTQLRIDSFFRLAQQEKEDAKR. The interaction with ERCC6/CSB stretch occupies residues 1011-1186; that stretch reads KSQRLNRAVT…RRARGRKRKT (176 aa). Disordered stretches follow at residues 1056–1081 and 1095–1186; these read QKRGITNTLEESSSLKRKRLSDSKGK and ESSD…KRKT. Positions 1057–1074 match the Nuclear localization signal 1 motif; it reads KRGITNTLEESSSLKRKR. The span at 1124-1133 shows a compositional bias: polar residues; that stretch reads TSASDSQNSV. A Nuclear localization signal 2 motif is present at residues 1169-1186; the sequence is FGKKRRKLRRARGRKRKT. Positions 1169–1186 are enriched in basic residues; that stretch reads FGKKRRKLRRARGRKRKT.

This sequence belongs to the XPG/RAD2 endonuclease family. XPG subfamily. As to quaternary structure, monomer. Homodimer. Component of the homologous recombination repair (HR) complex composed of ERCC5/XPG, BRCA2, PALB2, DSS1 and RAD51. Within the complex, interacts with BRCA2 and PALB2. Interacts with RNA polymerase II. Interacts (via C-terminus) with ERCC6/CSB; the interaction stimulates ERCC6/CSB binding to the DNA repair bubble and ERCC6/CSB ATPase activity. May form a complex composed of RNA polymerase II, ERCC6/CSB and ERCC5/XPG which associates with the DNA repair bubble during transcription-coupled nucleotide excision repair. Interacts with BRCA1; the interaction promotes the release of BRCA1 from DNA. Interacts with PCNA. Interacts with NTHL1; the interaction stimulates NTHL1 activity and NTHL1 binding to its DNA substrate. It depends on Mg(2+) as a cofactor.

The protein localises to the nucleus. It localises to the chromosome. Its function is as follows. Single-stranded structure-specific DNA endonuclease involved in DNA excision repair. Makes the 3'incision in DNA nucleotide excision repair (NER). Binds and bends DNA repair bubble substrate and breaks base stacking at the single-strand/double-strand DNA junction of the DNA bubble. Plays a role in base excision repair (BER) by promoting the binding of DNA glycosylase NTHL1 to its substrate and increasing NTHL1 catalytic activity that removes oxidized pyrimidines from DNA. Involved in transcription-coupled nucleotide excision repair (TCR) which allows RNA polymerase II-blocking lesions to be rapidly removed from the transcribed strand of active genes. Functions during the initial step of TCR in cooperation with ERCC6/CSB to recognized stalled RNA polymerase II. Also, stimulates ERCC6/CSB binding to the DNA repair bubble and ERCC6/CSB ATPase activity. Required for DNA replication fork maintenance and preservation of genomic stability. Involved in homologous recombination repair (HRR) induced by DNA replication stress by recruiting RAD51, BRCA2, and PALB2 to the damaged DNA site. In TFIIH stimulates the 5'-3' helicase activity of XPD/ERCC2 and the DNA translocase activity of XPB/ERCC3. During HRR, binds to the replication fork with high specificity and stabilizes it. Also, acts upstream of HRR, to promote the release of BRCA1 from DNA. This is DNA excision repair protein ERCC-5 (ERCC5) from Homo sapiens (Human).